Here is an 86-residue protein sequence, read N- to C-terminus: Small ribosomal subunit protein bS18 (86 aa).

The protein belongs to the bacterial ribosomal protein bS18 family. Part of the 30S ribosomal subunit. Forms a tight heterodimer with protein bS6.

Its function is as follows. Binds as a heterodimer with protein bS6 to the central domain of the 16S rRNA, where it helps stabilize the platform of the 30S subunit. The sequence is that of Small ribosomal subunit protein bS18 from Herpetosiphon aurantiacus (strain ATCC 23779 / DSM 785 / 114-95).